The primary structure comprises 137 residues: Methylglyoxal synthase (137 aa).

An MGS-like domain is found at 1 to 137; sequence MKIALIAHDR…NIVHGRDRDA (137 aa). Substrate-binding positions include histidine 8, lysine 12, 34–37, and 54–55; these read TGTT and SG. Aspartate 60 functions as the Proton donor/acceptor in the catalytic mechanism. Residue histidine 87 coordinates substrate.

Belongs to the methylglyoxal synthase family.

The enzyme catalyses dihydroxyacetone phosphate = methylglyoxal + phosphate. Catalyzes the formation of methylglyoxal from dihydroxyacetone phosphate. The polypeptide is Methylglyoxal synthase (Bacillus licheniformis (strain ATCC 14580 / DSM 13 / JCM 2505 / CCUG 7422 / NBRC 12200 / NCIMB 9375 / NCTC 10341 / NRRL NRS-1264 / Gibson 46)).